A 286-amino-acid polypeptide reads, in one-letter code: Transcription factor MafA (286 aa).

Phosphoserine is present on residues Ser-14 and Ser-49. Residues 51 to 85 (SSTPLSTPCSSVPSSPSFCAPSPGGQPSAGPTAAP) show a composition bias toward low complexity. The disordered stretch occupies residues 51–87 (SSTPLSTPCSSVPSSPSFCAPSPGGQPSAGPTAAPLG). 2 positions are modified to phosphothreonine: Thr-53 and Thr-57. Phosphoserine occurs at positions 61 and 65. Thr-113 is subject to Phosphothreonine. The disordered stretch occupies residues 126 to 167 (HHHHHHHQSYESFRPQPFGGEELPPAAHHHNAHHHHHHHHLR). A compositionally biased stretch (basic residues) spans 152-166 (AHHHNAHHHHHHHHL). A basic motif region spans residues 199–224 (RLKQNRRTLKNRGYAQSCRYKRVQQR). The bZIP domain occupies 199–262 (RLKQNRRTLK…DLYKEKYEKL (64 aa)). A leucine-zipper region spans residues 227-248 (LENEKCQLQSQVEQLKQEVSRL). A disordered region spans residues 265 to 286 (RGFPREPSPPAAPKTTAADFFM). The residue at position 272 (Ser-272) is a Phosphoserine. Residues 277 to 286 (PKTTAADFFM) show a composition bias toward low complexity.

It belongs to the bZIP family. Maf subfamily. Forms homodimers or heterodimers. May interact (via leucine-zipper domain) with MAFB. May interact with FOS and JUN. Interacts with PCAF; this interaction impairs MAFA ubiquitination.

It localises to the nucleus. Transcription factor involved in transcription regulation during lens development, including that of crystallin and filensin/BFSP1 genes. Binds to CRE-type MARE 5'-TGCTGACGTCAGCA-3' and TRE-type MARE 5'-TGCTGACTCAGCA-3' DNA sequences. This is Transcription factor MafA (MAFA) from Gallus gallus (Chicken).